Consider the following 284-residue polypeptide: Bifunctional protein FolD (284 aa).

Residues glycine 166–serine 168 and isoleucine 232 each bind NADP(+).

It belongs to the tetrahydrofolate dehydrogenase/cyclohydrolase family. As to quaternary structure, homodimer.

The catalysed reaction is (6R)-5,10-methylene-5,6,7,8-tetrahydrofolate + NADP(+) = (6R)-5,10-methenyltetrahydrofolate + NADPH. It carries out the reaction (6R)-5,10-methenyltetrahydrofolate + H2O = (6R)-10-formyltetrahydrofolate + H(+). The protein operates within one-carbon metabolism; tetrahydrofolate interconversion. In terms of biological role, catalyzes the oxidation of 5,10-methylenetetrahydrofolate to 5,10-methenyltetrahydrofolate and then the hydrolysis of 5,10-methenyltetrahydrofolate to 10-formyltetrahydrofolate. The chain is Bifunctional protein FolD from Shewanella sp. (strain W3-18-1).